A 466-amino-acid chain; its full sequence is tRNA(Ile)-lysidine synthase (466 aa).

Residue 26–31 coordinates ATP; sequence SGGSDS.

It belongs to the tRNA(Ile)-lysidine synthase family.

It localises to the cytoplasm. The catalysed reaction is cytidine(34) in tRNA(Ile2) + L-lysine + ATP = lysidine(34) in tRNA(Ile2) + AMP + diphosphate + H(+). Ligates lysine onto the cytidine present at position 34 of the AUA codon-specific tRNA(Ile) that contains the anticodon CAU, in an ATP-dependent manner. Cytidine is converted to lysidine, thus changing the amino acid specificity of the tRNA from methionine to isoleucine. This chain is tRNA(Ile)-lysidine synthase, found in Oceanobacillus iheyensis (strain DSM 14371 / CIP 107618 / JCM 11309 / KCTC 3954 / HTE831).